The chain runs to 399 residues: Formate-dependent phosphoribosylglycinamide formyltransferase (399 aa).

N(1)-(5-phospho-beta-D-ribosyl)glycinamide contacts are provided by residues 22-23 (EL) and glutamate 82. ATP-binding positions include arginine 114, lysine 155, 160 to 165 (SSGKGQ), 195 to 198 (EKMI), and glutamate 203. The ATP-grasp domain occupies 119–308 (RLAAETLHLL…EFALHVRAFL (190 aa)). Mg(2+)-binding residues include glutamate 267 and glutamate 279. N(1)-(5-phospho-beta-D-ribosyl)glycinamide-binding positions include aspartate 286, lysine 355, and 362-363 (RR).

This sequence belongs to the PurK/PurT family. As to quaternary structure, homodimer.

It carries out the reaction N(1)-(5-phospho-beta-D-ribosyl)glycinamide + formate + ATP = N(2)-formyl-N(1)-(5-phospho-beta-D-ribosyl)glycinamide + ADP + phosphate + H(+). It participates in purine metabolism; IMP biosynthesis via de novo pathway; N(2)-formyl-N(1)-(5-phospho-D-ribosyl)glycinamide from N(1)-(5-phospho-D-ribosyl)glycinamide (formate route): step 1/1. Its function is as follows. Involved in the de novo purine biosynthesis. Catalyzes the transfer of formate to 5-phospho-ribosyl-glycinamide (GAR), producing 5-phospho-ribosyl-N-formylglycinamide (FGAR). Formate is provided by PurU via hydrolysis of 10-formyl-tetrahydrofolate. This is Formate-dependent phosphoribosylglycinamide formyltransferase from Proteus mirabilis (strain HI4320).